A 209-amino-acid polypeptide reads, in one-letter code: Small ribosomal subunit protein uS3 (209 aa).

Residues 17–86 enclose the KH type-2 domain; sequence IDEYLEKELR…NPQIEVEEIK (70 aa).

The protein belongs to the universal ribosomal protein uS3 family. Part of the 30S ribosomal subunit.

Functionally, binds the lower part of the 30S subunit head. The sequence is that of Small ribosomal subunit protein uS3 from Thermococcus gammatolerans (strain DSM 15229 / JCM 11827 / EJ3).